The following is a 742-amino-acid chain: RING finger protein 145 homolog (742 aa).

Helical transmembrane passes span 109-129 (AAII…TLPL), 138-158 (HFLS…YVDL), 178-198 (HGFH…LLEV), 233-253 (ACTG…PSLI), 285-305 (ILEL…YVEL), 318-338 (ILLT…ALAV), 368-388 (SGYT…FLGM), 395-415 (ILLA…LFEI), 438-458 (ICIA…MLAL), 463-483 (IYTA…IGVI), and 533-553 (VKVG…IVNI). The segment at 592–630 (CAICFIEMKEEARITPCKHYFHGPCLRKWLAVKMVCPLC) adopts an RING-type; atypical zinc-finger fold. Disordered stretches follow at residues 642–684 (KSSS…PGDM) and 722–742 (AYES…ENNN). A compositionally biased stretch (acidic residues) spans 659 to 672 (AAVEENPENPEEQP).

It localises to the membrane. It is found in the golgi apparatus. The protein localises to the cis-Golgi network. Its subcellular location is the trans-Golgi network. It carries out the reaction S-ubiquitinyl-[E2 ubiquitin-conjugating enzyme]-L-cysteine + [acceptor protein]-L-lysine = [E2 ubiquitin-conjugating enzyme]-L-cysteine + N(6)-ubiquitinyl-[acceptor protein]-L-lysine.. Its function is as follows. E3 ubiquitin ligase that catalyzes the direct transfer of ubiquitin from E2 ubiquitin-conjugating enzyme to a specific substrate. Acting downstream of probable Golgi transport protein eas-1, involved in inhibition of activation of transcription factor sbp-1, thereby playing a role in regulating AMsh glial cell size. The protein is RING finger protein 145 homolog of Caenorhabditis elegans.